The sequence spans 151 residues: Potassium/proton antiporter CemA (151 aa).

The next 2 helical transmembrane spans lie at 7 to 27 (LPSLLYLVFIVLLPWGVSSSF) and 107 to 127 (ILHFSTNIICLAILSGSFFLG).

This sequence belongs to the CemA family.

Its subcellular location is the plastid. It localises to the chloroplast inner membrane. It carries out the reaction K(+)(in) + H(+)(out) = K(+)(out) + H(+)(in). In terms of biological role, contributes to K(+)/H(+) antiport activity by supporting proton efflux to control proton extrusion and homeostasis in chloroplasts in a light-dependent manner to modulate photosynthesis. Prevents excessive induction of non-photochemical quenching (NPQ) under continuous-light conditions. Indirectly promotes efficient inorganic carbon uptake into chloroplasts. The polypeptide is Potassium/proton antiporter CemA (Aegilops crassa (Persian goatgrass)).